A 363-amino-acid chain; its full sequence is Aminomethyltransferase (363 aa).

This sequence belongs to the GcvT family. As to quaternary structure, the glycine cleavage system is composed of four proteins: P, T, L and H.

It carries out the reaction N(6)-[(R)-S(8)-aminomethyldihydrolipoyl]-L-lysyl-[protein] + (6S)-5,6,7,8-tetrahydrofolate = N(6)-[(R)-dihydrolipoyl]-L-lysyl-[protein] + (6R)-5,10-methylene-5,6,7,8-tetrahydrofolate + NH4(+). In terms of biological role, the glycine cleavage system catalyzes the degradation of glycine. This chain is Aminomethyltransferase, found in Saccharophagus degradans (strain 2-40 / ATCC 43961 / DSM 17024).